The primary structure comprises 130 residues: Small ribosomal subunit protein uS11c (130 aa).

It belongs to the universal ribosomal protein uS11 family. As to quaternary structure, part of the 30S ribosomal subunit.

The protein localises to the plastid. The protein resides in the chloroplast. This chain is Small ribosomal subunit protein uS11c, found in Physcomitrium patens (Spreading-leaved earth moss).